Here is an 87-residue protein sequence, read N- to C-terminus: Large ribosomal subunit protein bL31B (87 aa).

It belongs to the bacterial ribosomal protein bL31 family. Type B subfamily. As to quaternary structure, part of the 50S ribosomal subunit.

This is Large ribosomal subunit protein bL31B from Burkholderia vietnamiensis (strain G4 / LMG 22486) (Burkholderia cepacia (strain R1808)).